We begin with the raw amino-acid sequence, 148 residues long: UPF0260 protein PC1_1943 (148 aa).

This sequence belongs to the UPF0260 family.

The polypeptide is UPF0260 protein PC1_1943 (Pectobacterium carotovorum subsp. carotovorum (strain PC1)).